The chain runs to 161 residues: S-ribosylhomocysteine lyase (161 aa).

Fe cation-binding residues include histidine 57, histidine 61, and cysteine 127.

The protein belongs to the LuxS family. Homodimer. It depends on Fe cation as a cofactor.

It carries out the reaction S-(5-deoxy-D-ribos-5-yl)-L-homocysteine = (S)-4,5-dihydroxypentane-2,3-dione + L-homocysteine. In terms of biological role, involved in the synthesis of autoinducer 2 (AI-2) which is secreted by bacteria and is used to communicate both the cell density and the metabolic potential of the environment. The regulation of gene expression in response to changes in cell density is called quorum sensing. Catalyzes the transformation of S-ribosylhomocysteine (RHC) to homocysteine (HC) and 4,5-dihydroxy-2,3-pentadione (DPD). In Streptococcus equi subsp. zooepidemicus (strain H70), this protein is S-ribosylhomocysteine lyase.